The primary structure comprises 607 residues: WD repeat-containing protein 1-B (607 aa).

WD repeat units follow at residues 4–45 (EIKK…IRNI), 48–87 (PAIA…IWDT), 93–135 (LLKY…LWDT), 138–176 (SVGE…FFEG), 180–218 (KFKF…LYDG), 224–263 (VCSL…IWDV), 270–306 (TTFN…YLDK), 311–351 (KPFR…YWDA), 358–408 (TFTG…KMDV), 432–474 (LKDK…LYSI), 480–518 (KDEG…VFSV), 523–561 (SEHN…VWTL), and 566–604 (TRIK…QWTV).

It belongs to the WD repeat AIP1 family.

The protein resides in the cell membrane. The protein localises to the cytoplasm. It is found in the cytoskeleton. Its subcellular location is the nucleus. Its function is as follows. Induces disassembly of actin filaments in conjunction with ADF/cofilin family proteins. Doesn't sever actin filaments alone, but caps the barbed ends of filaments severed by cofilin, which blocks annealing and depolymerization and allows more extensive severing by cofilin. The protein is WD repeat-containing protein 1-B (wdr1-b) of Xenopus laevis (African clawed frog).